The following is a 466-amino-acid chain: Glutamate-1-semialdehyde 2,1-aminomutase (466 aa).

Lys292 bears the N6-(pyridoxal phosphate)lysine mark.

The protein belongs to the class-III pyridoxal-phosphate-dependent aminotransferase family. HemL subfamily. In terms of assembly, homodimer. Pyridoxal 5'-phosphate is required as a cofactor.

The protein resides in the cytoplasm. The catalysed reaction is (S)-4-amino-5-oxopentanoate = 5-aminolevulinate. Its pathway is porphyrin-containing compound metabolism; protoporphyrin-IX biosynthesis; 5-aminolevulinate from L-glutamyl-tRNA(Glu): step 2/2. The chain is Glutamate-1-semialdehyde 2,1-aminomutase from Tropheryma whipplei (strain TW08/27) (Whipple's bacillus).